Reading from the N-terminus, the 1072-residue chain is DNA-directed RNA polymerase subunit beta (1072 aa).

This sequence belongs to the RNA polymerase beta chain family. In plastids the minimal PEP RNA polymerase catalytic core is composed of four subunits: alpha, beta, beta', and beta''. When a (nuclear-encoded) sigma factor is associated with the core the holoenzyme is formed, which can initiate transcription.

The protein localises to the plastid. Its subcellular location is the chloroplast. The enzyme catalyses RNA(n) + a ribonucleoside 5'-triphosphate = RNA(n+1) + diphosphate. Functionally, DNA-dependent RNA polymerase catalyzes the transcription of DNA into RNA using the four ribonucleoside triphosphates as substrates. In Crucihimalaya wallichii (Rock-cress), this protein is DNA-directed RNA polymerase subunit beta.